The primary structure comprises 283 residues: Pre-mRNA-splicing factor CWC23 (283 aa).

The region spanning 15–87 (NLYDVLELPT…DVRPHYDRWL (73 aa)) is the J domain.

The protein belongs to the DnaJ family. Belongs to the CWC complex (or CEF1-associated complex), a spliceosome sub-complex reminiscent of a late-stage spliceosome composed of the U2, U5 and U6 snRNAs and at least BUD13, BUD31, BRR2, CDC40, CEF1, CLF1, CUS1, CWC2, CWC15, CWC21, CWC22, CWC23, CWC24, CWC25, CWC27, ECM2, HSH155, IST3, ISY1, LEA1, MSL1, NTC20, PRP8, PRP9, PRP11, PRP19, PRP21, PRP22, PRP45, PRP46, SLU7, SMB1, SMD1, SMD2, SMD3, SMX2, SMX3, SNT309, SNU114, SPP2, SYF1, SYF2, RSE1 and YJU2.

It is found in the cytoplasm. The protein resides in the nucleus. Functionally, involved in pre-mRNA splicing. May be involved in endoplasmic reticulum-associated protein degradation (ERAD) and required for growth at low and high temperatures. This Saccharomyces cerevisiae (strain ATCC 204508 / S288c) (Baker's yeast) protein is Pre-mRNA-splicing factor CWC23 (CWC23).